The primary structure comprises 212 residues: Ras-related protein Rab-2A (212 aa).

The residue at position 2 (A2) is an N-acetylalanine. The required for interaction with PRKCI stretch occupies residues 2–19; sequence AYAYLFKYIIIGDTGVGK. Residues G16, V17, G18, K19, S20, C21, and T38 each coordinate GTP. Residue S20 participates in Mg(2+) binding. The Switch 1 signature appears at 37–42; that stretch reads LTMGVE. Mg(2+) contacts are provided by T38 and D61. A Switch 2 motif is present at residues 63–72; the sequence is AGQESFRSIT. 6 residues coordinate GTP: G64, N119, K120, D122, A150, and K151. The tract at residues 190-212 is disordered; that stretch reads QHAATNASHGGNQGGQQAGGGCC. A compositionally biased stretch (gly residues) spans 200–212; the sequence is GNQGGQQAGGGCC. Residues C211 and C212 are each lipidated (S-geranylgeranyl cysteine).

Belongs to the small GTPase superfamily. Rab family. In terms of assembly, interacts with PRKCI. Interacts with TRIP11. Interacts (in GTP-bound form) with GARIN1B. Interacts (GTP-bound) with HOPS complex component VPS39; interaction contributes to obtaining a functional HOPS complex that promotes autophagosome-lysosome membrane fusion driven by STX17-SNAP29-VAMP8. May interact with VPS41. The cofactor is Mg(2+). In terms of processing, prenylated. Prenylation is required for association with cellular membranes.

The protein resides in the endoplasmic reticulum-Golgi intermediate compartment membrane. Its subcellular location is the melanosome. The protein localises to the endoplasmic reticulum membrane. It localises to the golgi apparatus membrane. It is found in the cytoplasmic vesicle. The protein resides in the secretory vesicle. Its subcellular location is the acrosome. The protein localises to the autophagosome membrane. The catalysed reaction is GTP + H2O = GDP + phosphate + H(+). Regulated by guanine nucleotide exchange factors (GEFs) which promote the exchange of bound GDP for free GTP, GTPase activating proteins (GAPs) which increase the GTP hydrolysis activity, and GDP dissociation inhibitors (GDIs) which inhibit the dissociation of the nucleotide from the GTPase. Its function is as follows. The small GTPases Rab are key regulators of intracellular membrane trafficking, from the formation of transport vesicles to their fusion with membranes. Rabs cycle between active GTP-bound and inactive GDP-bound states. In their active state, drive transport of vesicular carriers from donor organelles to acceptor organelles to regulate the membrane traffic that maintains organelle identity and morphology. RAB2A regulates autophagy by promoting autophagosome-lysosome fusion via recruitment of the HOPS endosomal tethering complex; this process involves autophagosomal RAB2A and lysosomal RAB39A recruitment of HOPS subcomplexes VPS39-VPS11 and VPS41-VPS16-VPS18-VPS33A, respectively, which assemble into a functional complex to mediate membrane tethering and SNAREs-driven membrane fusion. Required for protein transport from the endoplasmic reticulum to the Golgi complex. Regulates the compacted morphology of the Golgi. Together with RAB2B, redundantly required for efficient autophagic flux. The protein is Ras-related protein Rab-2A (Rab2a) of Rattus norvegicus (Rat).